The following is a 416-amino-acid chain: Probable pectate lyase 8 (416 aa).

The N-terminal stretch at Met1–Ala24 is a signal peptide. 3 N-linked (GlcNAc...) asparagine glycosylation sites follow: Asn23, Asn28, and Asn52. Ca(2+)-binding residues include Asp214, Asp238, and Asp242. Arg294 is an active-site residue.

The protein belongs to the polysaccharide lyase 1 family. It depends on Ca(2+) as a cofactor.

It catalyses the reaction Eliminative cleavage of (1-&gt;4)-alpha-D-galacturonan to give oligosaccharides with 4-deoxy-alpha-D-galact-4-enuronosyl groups at their non-reducing ends.. It participates in glycan metabolism; pectin degradation; 2-dehydro-3-deoxy-D-gluconate from pectin: step 2/5. This Arabidopsis thaliana (Mouse-ear cress) protein is Probable pectate lyase 8.